The primary structure comprises 123 residues: Insulin-like peptide-1 (123 aa).

The N-terminal stretch at 1–24 is a signal peptide; sequence MTTSSYFLLVALGLLLYVCQSSFG. Cystine bridges form between cysteine 29-cysteine 106, cysteine 41-cysteine 109, cysteine 53-cysteine 122, and cysteine 108-cysteine 113. Proline 34 is subject to 4-hydroxyproline; partial. A propeptide spans 59 to 102 (c peptide); that stretch reads EQGGANNARAYTGRTSSLMKRRGFLSLLKKRGKRDEGSLQRSGR. Glutamate 107 is subject to 4-carboxyglutamate. Glutamate 117 carries the 4-carboxyglutamate; partial modification.

Belongs to the insulin family. In terms of assembly, heterodimer of A and B chains; disulfide-linked. In terms of tissue distribution, expressed by the venom duct.

Its subcellular location is the secreted. Functionally, this venom insulin facilitates prey capture by rapidly inducing hypoglycemic shock. Intraperitoneal injection of this peptide into zebrafish lowers blood glucose with the same potency than human insulin. In vivo, when applied to water, this peptide reduces overall locomotor activity of zebrafish larvae, observed as a significant decrease in the percentage of time spent swimming and movement frequency. The protein is Insulin-like peptide-1 of Conus victoriae (Queen Victoria cone).